The primary structure comprises 94 residues: Long neurotoxin LNTX1 (94 aa).

A signal peptide spans 1–21 (MKILLLTLVVVTIMCLDLGYT). Intrachain disulfides connect Cys24–Cys43, Cys36–Cys64, Cys49–Cys53, Cys68–Cys79, and Cys80–Cys85.

Belongs to the three-finger toxin family. Long-chain subfamily. Type II alpha-neurotoxin sub-subfamily. Monomer. As to expression, expressed by the venom gland.

The protein localises to the secreted. Binds with high affinity to muscular (alpha-1/CHRNA1) and neuronal (alpha-7/CHRNA7) nicotinic acetylcholine receptor (nAChR) and inhibits acetylcholine from binding to the receptor, thereby impairing neuromuscular and neuronal transmission. Recombinant LNTX1 leads to a functional block of the muscle-type acetylcholine receptors. Has a cytotoxic activity. This Ophiophagus hannah (King cobra) protein is Long neurotoxin LNTX1.